A 282-amino-acid polypeptide reads, in one-letter code: Secretory carrier-associated membrane protein 1 (282 aa).

Residues 1 to 49 (MSRYQSHSFDDGEINPFANPTSVPAATSKLSPLPPEPYDRGATMDIPLD) form a disordered region. At 1 to 117 (MSRYQSHSFD…EIPIHLQRIQ (117 aa)) the chain is on the cytoplasmic side. Over residues 18–30 (ANPTSVPAATSKL) the composition is skewed to polar residues. Phosphoserine is present on Ser31. A coiled-coil region spans residues 48–93 (LDSGKDLKAKEKELREKEAELKRREQEIKRKEDAIAQAGIVIEEKN). 4 helical membrane-spanning segments follow: residues 118 to 138 (YVAF…IVAV), 150 to 170 (IWFL…VMWY), 185 to 205 (FGWF…AAVA), and 233 to 253 (IFYF…IWVI). At 254 to 282 (QQVYMYFRGSGKAAEMKQEATRRAMMAAL) the chain is on the cytoplasmic side.

The protein belongs to the SCAMP family.

The protein resides in the cell membrane. It is found in the cytoplasmic vesicle. Its subcellular location is the secretory vesicle membrane. Probably involved in membrane trafficking. This Arabidopsis thaliana (Mouse-ear cress) protein is Secretory carrier-associated membrane protein 1 (SCAMP1).